Here is a 236-residue protein sequence, read N- to C-terminus: Small ribosomal subunit protein uS2c (236 aa).

This sequence belongs to the universal ribosomal protein uS2 family.

It is found in the plastid. The protein localises to the chloroplast. This Vitis vinifera (Grape) protein is Small ribosomal subunit protein uS2c (rps2).